Reading from the N-terminus, the 209-residue chain is Large ribosomal subunit protein bL25 (209 aa).

It belongs to the bacterial ribosomal protein bL25 family. CTC subfamily. As to quaternary structure, part of the 50S ribosomal subunit; part of the 5S rRNA/L5/L18/L25 subcomplex. Contacts the 5S rRNA. Binds to the 5S rRNA independently of L5 and L18.

Its function is as follows. This is one of the proteins that binds to the 5S RNA in the ribosome where it forms part of the central protuberance. This is Large ribosomal subunit protein bL25 from Xanthomonas campestris pv. campestris (strain 8004).